The following is a 486-amino-acid chain: Cobyric acid synthase (486 aa).

The GATase cobBQ-type domain occupies V248–A435. C329 functions as the Nucleophile in the catalytic mechanism. Residue H427 is part of the active site.

This sequence belongs to the CobB/CobQ family. CobQ subfamily.

It functions in the pathway cofactor biosynthesis; adenosylcobalamin biosynthesis. Catalyzes amidations at positions B, D, E, and G on adenosylcobyrinic A,C-diamide. NH(2) groups are provided by glutamine, and one molecule of ATP is hydrogenolyzed for each amidation. This Pseudomonas syringae pv. syringae (strain B728a) protein is Cobyric acid synthase.